The primary structure comprises 189 residues: Effector protein NleF (189 aa).

The interval 186 to 189 (LQCG) is interaction with host caspases.

As to quaternary structure, monomer. Interacts (via C-terminus) with human CASP4, CASP8 and CASP9.

Its subcellular location is the secreted. It localises to the host cytoplasm. Functionally, effector protein that alters host cell physiology and promotes bacterial survival in host tissues. Inhibits the catalytic activity of human CASP4, CASP8 and CASP9, and thereby inhibits apoptosis of infected host cells. The chain is Effector protein NleF (nleF) from Escherichia coli O157:H7.